Consider the following 331-residue polypeptide: DNA-directed RNA polymerase subunit alpha (331 aa).

The interval 1–223 (MDQKRPQLKA…DELTVFGNVE (223 aa)) is alpha N-terminal domain (alpha-NTD). The tract at residues 260 to 331 (PYPADLDTPR…LAQFGLALRD (72 aa)) is alpha C-terminal domain (alpha-CTD).

The protein belongs to the RNA polymerase alpha chain family. In terms of assembly, homodimer. The RNAP catalytic core consists of 2 alpha, 1 beta, 1 beta' and 1 omega subunit. When a sigma factor is associated with the core the holoenzyme is formed, which can initiate transcription.

The enzyme catalyses RNA(n) + a ribonucleoside 5'-triphosphate = RNA(n+1) + diphosphate. Its function is as follows. DNA-dependent RNA polymerase catalyzes the transcription of DNA into RNA using the four ribonucleoside triphosphates as substrates. This Deinococcus geothermalis (strain DSM 11300 / CIP 105573 / AG-3a) protein is DNA-directed RNA polymerase subunit alpha.